Here is a 182-residue protein sequence, read N- to C-terminus: dTTP/UTP pyrophosphatase (182 aa).

The active-site Proton acceptor is aspartate 64.

This sequence belongs to the Maf family. YhdE subfamily. A divalent metal cation is required as a cofactor.

It localises to the cytoplasm. The catalysed reaction is dTTP + H2O = dTMP + diphosphate + H(+). It carries out the reaction UTP + H2O = UMP + diphosphate + H(+). Nucleoside triphosphate pyrophosphatase that hydrolyzes dTTP and UTP. May have a dual role in cell division arrest and in preventing the incorporation of modified nucleotides into cellular nucleic acids. The polypeptide is dTTP/UTP pyrophosphatase (Thermosipho melanesiensis (strain DSM 12029 / CIP 104789 / BI429)).